Consider the following 409-residue polypeptide: Argininosuccinate synthase (409 aa).

Residues 10 to 18 (AYSGGLDTS) and A37 contribute to the ATP site. L-citrulline-binding residues include Y90 and S95. Residue G120 participates in ATP binding. The L-aspartate site is built by T122, N126, and D127. Residue N126 coordinates L-citrulline. Positions 130, 182, 191, 267, and 279 each coordinate L-citrulline.

The protein belongs to the argininosuccinate synthase family. Type 1 subfamily. Homotetramer.

The protein resides in the cytoplasm. It catalyses the reaction L-citrulline + L-aspartate + ATP = 2-(N(omega)-L-arginino)succinate + AMP + diphosphate + H(+). Its pathway is amino-acid biosynthesis; L-arginine biosynthesis; L-arginine from L-ornithine and carbamoyl phosphate: step 2/3. This Azoarcus sp. (strain BH72) protein is Argininosuccinate synthase.